The following is a 148-amino-acid chain: Large ribosomal subunit protein uL15 (148 aa).

Over residues 1 to 11 (MSEPIKLHDLR) the composition is skewed to basic and acidic residues. The tract at residues 1–52 (MSEPIKLHDLRPAAGSNKAKTRVGRGEASKGKTAGRGTKGTKARKQVSAAFE) is disordered.

It belongs to the universal ribosomal protein uL15 family. In terms of assembly, part of the 50S ribosomal subunit.

Binds to the 23S rRNA. The sequence is that of Large ribosomal subunit protein uL15 from Corynebacterium glutamicum (strain R).